A 407-amino-acid chain; its full sequence is SERPINE1 mRNA-binding protein 1 (407 aa).

A Phosphoserine modification is found at Ser-25. Residues 33 to 227 (AAENKKKEAG…GSGSHNWGTV (195 aa)) are disordered. Residues 51 to 68 (AKSAAQAAAQTNSNAAGK) are compositionally biased toward low complexity. Lys-52 carries the N6-acetyllysine; alternate modification. Lys-52 participates in a covalent cross-link: Glycyl lysine isopeptide (Lys-Gly) (interchain with G-Cter in SUMO1); alternate. Lys-68 carries the N6-acetyllysine modification. Basic and acidic residues-rich tracts occupy residues 70–80 (LRKESQKDRKN), 89–114 (VDKK…RRPD), and 122–162 (KIID…DRPI). Lys-102 participates in a covalent cross-link: Glycyl lysine isopeptide (Lys-Gly) (interchain with G-Cter in SUMO1); alternate. Lys-102 is covalently cross-linked (Glycyl lysine isopeptide (Lys-Gly) (interchain with G-Cter in SUMO2)). A Glycyl lysine isopeptide (Lys-Gly) (interchain with G-Cter in SUMO2); alternate cross-link involves residue Lys-102. Residues Lys-122 and Lys-140 each carry the N6-acetyllysine modification. The span at 164–182 (GRGGLGRGRGGRGRGMGRG) shows a compositional bias: gly residues. 2 positions are modified to omega-N-methylarginine: Arg-165 and Arg-188. Residues 183-199 (DGFDSRGKREFDRHSGS) are compositionally biased toward basic and acidic residues. Residues Ser-197, Ser-199, Ser-203, Ser-205, and Ser-208 each carry the phosphoserine modification. At Lys-211 the chain carries N6-acetyllysine; alternate. A Glycyl lysine isopeptide (Lys-Gly) (interchain with G-Cter in SUMO2); alternate cross-link involves residue Lys-211. Arg-216 is modified (omega-N-methylarginine). Ser-221 carries the phosphoserine modification. Residue Thr-226 is modified to Phosphothreonine. Residue Lys-228 forms a Glycyl lysine isopeptide (Lys-Gly) (interchain with G-Cter in SUMO1); alternate linkage. Lys-228 is covalently cross-linked (Glycyl lysine isopeptide (Lys-Gly) (interchain with G-Cter in SUMO2); alternate). Ser-234 is modified (phosphoserine). Residues 242-256 (ISYNCSDLDQSNVTE) show a composition bias toward polar residues. Disordered regions lie at residues 242–291 (ISYN…TLDE) and 327–407 (SKSE…PALA). Residues 261–274 (GEEHPVADTENKEN) are compositionally biased toward basic and acidic residues. Residue Lys-280 forms a Glycyl lysine isopeptide (Lys-Gly) (interchain with G-Cter in SUMO1); alternate linkage. Residue Lys-280 forms a Glycyl lysine isopeptide (Lys-Gly) (interchain with G-Cter in SUMO2) linkage. Lys-280 participates in a covalent cross-link: Glycyl lysine isopeptide (Lys-Gly) (interchain with G-Cter in SUMO2); alternate. Composition is skewed to basic and acidic residues over residues 281 to 291 (EEGPKEMTLDE) and 327 to 341 (SKSE…VMDH). N6-acetyllysine is present on Lys-328. Residue Ser-329 is modified to Phosphoserine. A compositionally biased stretch (gly residues) spans 362 to 371 (GRPGRGGRGG). Omega-N-methylarginine is present on residues Arg-363, Arg-366, and Arg-369. Phosphoserine occurs at positions 391 and 393.

This sequence belongs to the SERBP1-HABP4 family. In terms of assembly, associates with mature 80S ribosomes. Interacts with EEF2/eEF2; interaction sequesters EEF2/eEF2 at the A-site of the ribosome, thereby blocking the interaction sites of the mRNA-tRNA complex, promoting ribosome stabilization and hibernation. Interacts with SPIN1. Interacts with CHD3 and TDRD3. Interacts with ZDHHC17 (via ANK repeats). In terms of processing, phosphorylation by MTOR inhibits SERBP1 and relieves ribosome hibernation.

Its function is as follows. Ribosome-binding protein that promotes ribosome hibernation, a process during which ribosomes are stabilized in an inactive state and preserved from proteasomal degradation. Acts via its association with EEF2/eEF2 factor, sequestering EEF2/eEF2 at the A-site of the ribosome and promoting ribosome stabilization and storage in an inactive state. May also play a role in the regulation of mRNA stability: binds to the 3'-most 134 nt of the SERPINE1/PAI1 mRNA, a region which confers cyclic nucleotide regulation of message decay. Seems to play a role in PML-nuclear bodies formation. The sequence is that of SERPINE1 mRNA-binding protein 1 from Oryctolagus cuniculus (Rabbit).